We begin with the raw amino-acid sequence, 395 residues long: Indoleacetate--lysine synthetase (395 aa).

It belongs to the ATP-dependent AMP-binding enzyme family.

It carries out the reaction (indol-3-yl)acetate + L-lysine + ATP = N(6)-[(indole-3-yl)acetyl]-L-lysine + ADP + phosphate + H(+). Conversion of IAA to IAA-lysine. This chain is Indoleacetate--lysine synthetase (iaaL), found in Pseudomonas savastanoi (Pseudomonas syringae pv. savastanoi).